The chain runs to 382 residues: Leucine carboxyl methyltransferase 1 (382 aa).

Polar residues predominate over residues 1-11 (MSAPQIPNLNT). Residues 1–45 (MSAPQIPNLNTLRRGGGRGRFRARGGPDSSSSSGNKDRVVQGTDN) form a disordered region. S-adenosyl-L-methionine contacts are provided by residues Arg88, Gly121, Asp146, 193 to 194 (DL), and Glu230.

The protein belongs to the methyltransferase superfamily. LCMT family.

The catalysed reaction is [phosphatase 2A protein]-C-terminal L-leucine + S-adenosyl-L-methionine = [phosphatase 2A protein]-C-terminal L-leucine methyl ester + S-adenosyl-L-homocysteine. Methylates the carboxyl group of the C-terminal leucine residue of protein phosphatase 2A catalytic subunits to form alpha-leucine ester residues. The protein is Leucine carboxyl methyltransferase 1 (ppm1) of Emericella nidulans (strain FGSC A4 / ATCC 38163 / CBS 112.46 / NRRL 194 / M139) (Aspergillus nidulans).